We begin with the raw amino-acid sequence, 614 residues long: Vitamin B12 transporter BtuB (614 aa).

The signal sequence occupies residues 1–20 (MIKKATLLTAFSVTAFSAWA). Positions 26 to 33 (DTLVVTAN) match the TonB box motif. The TBDR plug domain maps to 38-152 (PRSAVLAPVT…IGGVVNIITT (115 aa)). Cyanocob(III)alamin contacts are provided by residues serine 85, asparagine 92, and 110–111 (VS). Residues 155–614 (NPGTELTAGW…EYTLSGSYTF (460 aa)) form the TBDR beta-barrel domain. The next 3 membrane-spanning stretches (beta stranded) occupy residues 158 to 165 (TELTAGWG), 169 to 178 (YQNYDISTQQ), and 184 to 195 (TRATLIGDYEYT). Aspartate 199, glutamine 211, aspartate 213, and aspartate 215 together coordinate Ca(2+). 2 beta stranded membrane-spanning segments follow: residues 217–227 (FLSKTLYGALE) and 232–248 (DRWSGFVRGYGYDNRTD). 2 residues coordinate Ca(2+): tyrosine 249 and aspartate 250. Alanine 251 lines the cyanocob(III)alamin pocket. Aspartate 261 lines the Ca(2+) pocket. The next 14 membrane-spanning stretches (beta stranded) occupy residues 263-277 (RKLYSQSWDAGLHFN), 279-296 (ERIQSQLVSSYSHSKDYN), 309-325 (TLDEMKQYNVQWTNSVV), 328-337 (HGNVGAGVDW), 353-369 (YDQRNTGVYLTGLQQLG), 371-381 (FTLEAAARSDD), 385-400 (FGRHGTWQTSAGWEFI), 403-417 (YRFIASYGTSYKAPN), 434-443 (KSKQWEGAFE), 449-458 (VSWRISGYRN), 473-490 (YYNEGKARIKGIEATANF), 494-509 (PLTHTVSYDYVDARNA), 517-529 (RRSKQMAKYQLDW), and 535-550 (DWGMTYQYLGSRYDSD). A cyanocob(III)alamin-binding site is contributed by threonine 309. A cyanocob(III)alamin-binding site is contributed by arginine 517. Tyrosine 551 provides a ligand contact to cyanocob(III)alamin. A run of 3 beta stranded transmembrane segments spans residues 558–572 (TVKMGGVSLWDLTVA), 585–596 (IANLFDKDYETV), and 602–614 (AGREYTLSGSYTF). The TonB C-terminal box signature appears at 597–614 (YGYQTAGREYTLSGSYTF).

Belongs to the TonB-dependent receptor family. BtuB (TC 1.B.14.3.1) subfamily.

The protein localises to the cell outer membrane. Functionally, involved in the active translocation of vitamin B12 (cyanocobalamin) across the outer membrane to the periplasmic space. It derives its energy for transport by interacting with the trans-periplasmic membrane protein TonB. This is Vitamin B12 transporter BtuB from Salmonella typhimurium (strain LT2 / SGSC1412 / ATCC 700720).